The chain runs to 214 residues: Probable GTP-binding protein EngB (214 aa).

Residues 31 to 214 (GPPEIAFAGR…LRAAILQTIA (184 aa)) enclose the EngB-type G domain. Residues 39-46 (GRSNVGKS), 66-70 (GRTQE), 93-96 (DMPG), 160-163 (TKSD), and 194-196 (TSS) contribute to the GTP site. Positions 46 and 68 each coordinate Mg(2+).

Belongs to the TRAFAC class TrmE-Era-EngA-EngB-Septin-like GTPase superfamily. EngB GTPase family. The cofactor is Mg(2+).

Functionally, necessary for normal cell division and for the maintenance of normal septation. This is Probable GTP-binding protein EngB from Bartonella tribocorum (strain CIP 105476 / IBS 506).